The primary structure comprises 191 residues: dCTP deaminase, dUMP-forming (191 aa).

DCTP-binding positions include Lys-101–Arg-106, Asp-119, Thr-127–Glu-129, Gln-148, Tyr-162, and Gln-174. Glu-129 acts as the Proton donor/acceptor in catalysis.

This sequence belongs to the dCTP deaminase family. As to quaternary structure, homotrimer.

It carries out the reaction dCTP + 2 H2O = dUMP + NH4(+) + diphosphate. Its pathway is pyrimidine metabolism; dUMP biosynthesis; dUMP from dCTP: step 1/1. Functionally, bifunctional enzyme that catalyzes both the deamination of dCTP to dUTP and the hydrolysis of dUTP to dUMP without releasing the toxic dUTP intermediate. This is dCTP deaminase, dUMP-forming from Streptomyces avermitilis (strain ATCC 31267 / DSM 46492 / JCM 5070 / NBRC 14893 / NCIMB 12804 / NRRL 8165 / MA-4680).